A 130-amino-acid polypeptide reads, in one-letter code: Small ribosomal subunit protein uS8B (130 aa).

The protein belongs to the universal ribosomal protein uS8 family.

In Drosophila melanogaster (Fruit fly), this protein is Small ribosomal subunit protein uS8B (RpS15Ab).